A 290-amino-acid polypeptide reads, in one-letter code: Acetyl-coenzyme A carboxylase carboxyl transferase subunit beta (290 aa).

In terms of domain architecture, CoA carboxyltransferase N-terminal spans 28–290; it reads IMTKCPKCKK…TGGDIEWLQD (263 aa). Cysteine 32, cysteine 35, cysteine 51, and cysteine 54 together coordinate Zn(2+). The segment at 32 to 54 adopts a C4-type zinc-finger fold; sequence CPKCKKIMLTKELDKNMRVCMNC.

Belongs to the AccD/PCCB family. Acetyl-CoA carboxylase is a heterohexamer composed of biotin carboxyl carrier protein (AccB), biotin carboxylase (AccC) and two subunits each of ACCase subunit alpha (AccA) and ACCase subunit beta (AccD). Requires Zn(2+) as cofactor.

Its subcellular location is the cytoplasm. The enzyme catalyses N(6)-carboxybiotinyl-L-lysyl-[protein] + acetyl-CoA = N(6)-biotinyl-L-lysyl-[protein] + malonyl-CoA. It functions in the pathway lipid metabolism; malonyl-CoA biosynthesis; malonyl-CoA from acetyl-CoA: step 1/1. With respect to regulation, inhibited by pyrrolidine dione antibiotics moiramide B (CPD1) and CPD2. In terms of biological role, component of the acetyl coenzyme A carboxylase (ACC) complex. Biotin carboxylase (BC) catalyzes the carboxylation of biotin on its carrier protein (BCCP) and then the CO(2) group is transferred by the transcarboxylase to acetyl-CoA to form malonyl-CoA. The sequence is that of Acetyl-coenzyme A carboxylase carboxyl transferase subunit beta from Bacillus subtilis (strain 168).